A 207-amino-acid polypeptide reads, in one-letter code: Large ribosomal subunit protein bL25 (207 aa).

The protein belongs to the bacterial ribosomal protein bL25 family. CTC subfamily. Part of the 50S ribosomal subunit; part of the 5S rRNA/L5/L18/L25 subcomplex. Contacts the 5S rRNA. Binds to the 5S rRNA independently of L5 and L18.

In terms of biological role, this is one of the proteins that binds to the 5S RNA in the ribosome where it forms part of the central protuberance. This chain is Large ribosomal subunit protein bL25, found in Orientia tsutsugamushi (strain Boryong) (Rickettsia tsutsugamushi).